The primary structure comprises 420 residues: ATP phosphoribosyltransferase regulatory subunit (420 aa).

It belongs to the class-II aminoacyl-tRNA synthetase family. HisZ subfamily. In terms of assembly, heteromultimer composed of HisG and HisZ subunits.

It is found in the cytoplasm. The protein operates within amino-acid biosynthesis; L-histidine biosynthesis; L-histidine from 5-phospho-alpha-D-ribose 1-diphosphate: step 1/9. In terms of biological role, required for the first step of histidine biosynthesis. May allow the feedback regulation of ATP phosphoribosyltransferase activity by histidine. The chain is ATP phosphoribosyltransferase regulatory subunit from Bacillus cereus (strain ATCC 10987 / NRS 248).